The chain runs to 1010 residues: Phosphoenolpyruvate carboxylase (1010 aa).

Over residues 1-18 the composition is skewed to polar residues; that stretch reads MIMRSPETSGASMPQSTA. Disordered regions lie at residues 1-36 and 132-154; these read MIMR…PGAG and LRPS…PPLA. Active-site residues include H195 and K652. Residues 967 to 986 form a disordered region; sequence QNRQPPMSESPGTPEDRRTY.

The protein belongs to the PEPCase type 1 family. Requires Mg(2+) as cofactor.

It carries out the reaction oxaloacetate + phosphate = phosphoenolpyruvate + hydrogencarbonate. Functionally, forms oxaloacetate, a four-carbon dicarboxylic acid source for the tricarboxylic acid cycle. This is Phosphoenolpyruvate carboxylase from Parasynechococcus marenigrum (strain WH8102).